A 265-amino-acid polypeptide reads, in one-letter code: S-adenosylmethionine decarboxylase proenzyme (265 aa).

Serine 114 serves as the catalytic Schiff-base intermediate with substrate; via pyruvic acid. The residue at position 114 (serine 114) is a Pyruvic acid (Ser); by autocatalysis. Histidine 119 (proton acceptor; for processing activity) is an active-site residue. Cysteine 142 (proton donor; for catalytic activity) is an active-site residue.

This sequence belongs to the prokaryotic AdoMetDC family. Type 2 subfamily. Heterooctamer of four alpha and four beta chains arranged as a tetramer of alpha/beta heterodimers. It depends on pyruvate as a cofactor. Post-translationally, is synthesized initially as an inactive proenzyme. Formation of the active enzyme involves a self-maturation process in which the active site pyruvoyl group is generated from an internal serine residue via an autocatalytic post-translational modification. Two non-identical subunits are generated from the proenzyme in this reaction, and the pyruvate is formed at the N-terminus of the alpha chain, which is derived from the carboxyl end of the proenzyme. The post-translation cleavage follows an unusual pathway, termed non-hydrolytic serinolysis, in which the side chain hydroxyl group of the serine supplies its oxygen atom to form the C-terminus of the beta chain, while the remainder of the serine residue undergoes an oxidative deamination to produce ammonia and the pyruvoyl group blocking the N-terminus of the alpha chain.

The catalysed reaction is S-adenosyl-L-methionine + H(+) = S-adenosyl 3-(methylsulfanyl)propylamine + CO2. It functions in the pathway amine and polyamine biosynthesis; S-adenosylmethioninamine biosynthesis; S-adenosylmethioninamine from S-adenosyl-L-methionine: step 1/1. Catalyzes the decarboxylation of S-adenosylmethionine to S-adenosylmethioninamine (dcAdoMet), the propylamine donor required for the synthesis of the polyamines spermine and spermidine from the diamine putrescine. The sequence is that of S-adenosylmethionine decarboxylase proenzyme from Buchnera aphidicola subsp. Acyrthosiphon pisum (strain APS) (Acyrthosiphon pisum symbiotic bacterium).